Consider the following 407-residue polypeptide: MNKNEYMMHLLARTIRTRNDDMITPLITQLADMQVSMDILEKHNFPALVAEYAPFNKAAQSLSHSVLVWKNDELAQEKSYMLKEFVRICKDQHQPEEFLLRLTCSLINLNDFELTRSCFDIIVSFGLTLNAYDEFGIFRKAMEYQGQMEEADKIISDVDAMLLRNEFLEEDEAEEQADNEMDAFEEEGVEEVDQEVVDFNDNESVISETESGVFTDEELDMEDHAEVMRRHAQDQALVSEICMVFLAGCIKSGRSDVISAAIQFTGAFFYPLALLRKYDIQYLIYCYGSHNEDAELLMNHIKHLQAIEIAGERQEFFKMFMETTFRNAETVTDSVMAQMKGFLEDGDDFMISCTLHVFLKMPITLSQFKNSHVEACLENLESGLAAQLGFMLKMKIQLLEQIDYEIW.

Belongs to the Pes-10 family. In terms of tissue distribution, in the embryo, expressed in newly arisen somatic blastomeres.

Its subcellular location is the nucleus. It localises to the cytoplasm. This Caenorhabditis elegans protein is Patterned expression site protein 10 (pes-10).